We begin with the raw amino-acid sequence, 628 residues long: E3 SUMO-protein ligase PIAS3 (628 aa).

The tract at residues 1–200 is interaction with CCAR2; that stretch reads MAELGELKHM…QLRFCLCETS (200 aa). In terms of domain architecture, SAP spans 11–45; that stretch reads VMSFRVSELQVLLGFAGRNKSGRKHELLAKALHLL. The LXXLL motif signature appears at 19–23; the sequence is LQVLL. Glycyl lysine isopeptide (Lys-Gly) (interchain with G-Cter in SUMO2) cross-links involve residues lysine 46, lysine 56, lysine 230, and lysine 307. Positions 115-280 constitute a PINIT domain; the sequence is MHPPLPQPVH…SLSVYLVRQL (166 aa). The SP-RING-type zinc finger occupies 312-393; it reads PDSEVATTSL…FMEILNSCSD (82 aa). Residues cysteine 343, histidine 345, cysteine 366, and cysteine 369 each contribute to the Zn(2+) site. An SUMO1-binding region spans residues 450 to 460; sequence LTIESSSDEED. Residues lysine 466 and lysine 482 each participate in a glycyl lysine isopeptide (Lys-Gly) (interchain with G-Cter in SUMO2) cross-link. Residues 571–628 are disordered; sequence GPLAPTLGSSHRSSTPAPPPGRVSSIVAPGSSLREGHGGPLPSGPSLTGCRSDVISLD.

Belongs to the PIAS family. Monomer. Interacts with PLAG1 and ZFHX3. Interacts with STAT5A; the interaction occurs on stimulation by PRL. Binds SUMO1 and UBE2I. Interacts with AR, BCL11A, HMGA2, IRF1 and NCOA2. Interacts with MITF; the interaction inhibits the transcriptional activity of MITF. Interacts with STAT3; the interaction occurs on stimulation by IL6, CNTF or OSM and inhibits the DNA binding activity of STAT3. Interacts with GFI1; the interaction relieves the inhibitory effect of PIAS3 on STAT3-mediated transcriptional activity. Interacts with MTA1. Interacts with CCAR2 (via N-terminus). Interacts with TRIM8. Interacts with PRDM1. Sumoylated. As to expression, expressed in kidney, heart, spleen, brain and cerebellum; weak expression, if any, in liver and lung.

It localises to the cytoplasm. It is found in the nucleus. The protein localises to the nucleus speckle. Its pathway is protein modification; protein sumoylation. Functionally, functions as an E3-type small ubiquitin-like modifier (SUMO) ligase, stabilizing the interaction between UBE2I and the substrate, and as a SUMO-tethering factor. Plays a crucial role as a transcriptional coregulation in various cellular pathways, including the STAT pathway and the steroid hormone signaling pathway. Repressor of STAT3 signaling via inhibiting STAT3 DNA-binding and suppressing cell growth. Repressor of MITF transcriptional activity. Enhances the sumoylation of MTA1 and may participate in its paralog-selective sumoylation. Sumoylates CCAR2 which promotes its interaction with SIRT1. Diminishes the sumoylation of ZFHX3 by preventing the colocalization of ZFHX3 with SUMO1 in the nucleus. In Mus musculus (Mouse), this protein is E3 SUMO-protein ligase PIAS3 (Pias3).